Consider the following 357-residue polypeptide: Protein RecA (357 aa).

71 to 78 lines the ATP pocket; the sequence is GPESSGKT.

Belongs to the RecA family.

It localises to the cytoplasm. In terms of biological role, can catalyze the hydrolysis of ATP in the presence of single-stranded DNA, the ATP-dependent uptake of single-stranded DNA by duplex DNA, and the ATP-dependent hybridization of homologous single-stranded DNAs. It interacts with LexA causing its activation and leading to its autocatalytic cleavage. The polypeptide is Protein RecA (Ehrlichia canis (strain Jake)).